Here is a 148-residue protein sequence, read N- to C-terminus: Arginine repressor (148 aa).

It belongs to the ArgR family.

The protein localises to the cytoplasm. Its pathway is amino-acid biosynthesis; L-arginine biosynthesis [regulation]. Its function is as follows. Regulates arginine biosynthesis genes. The protein is Arginine repressor of Chloroherpeton thalassium (strain ATCC 35110 / GB-78).